We begin with the raw amino-acid sequence, 259 residues long: DNA adenine methylase (259 aa).

Residues Tyr7, Lys11, 32-37 (FCGGLS), Asp50, 156-157 (HF), Asp171, and Tyr181 contribute to the S-adenosyl-L-methionine site.

Belongs to the N(4)/N(6)-methyltransferase family. In terms of assembly, monomer.

It catalyses the reaction a 2'-deoxyadenosine in DNA + S-adenosyl-L-methionine = an N(6)-methyl-2'-deoxyadenosine in DNA + S-adenosyl-L-homocysteine + H(+). Functionally, an alpha subtype methylase, recognizes the double-stranded sequence 5'-GATC-3' and methylates A-2. Also acts on 5-hydroxymethylcytosine (hmC)-containing DNA, the normal base in this virus. May prevent degradation of viral DNA by the host restriction-modification antiviral defense system. The chain is DNA adenine methylase from Enterobacteria phage T4 (Bacteriophage T4).